A 64-amino-acid chain; its full sequence is Large ribosomal subunit protein bL35 (64 aa).

It belongs to the bacterial ribosomal protein bL35 family.

The chain is Large ribosomal subunit protein bL35 from Ureaplasma urealyticum serovar 10 (strain ATCC 33699 / Western).